A 159-amino-acid polypeptide reads, in one-letter code: Neuroglobin-2 (159 aa).

A Globin domain is found at 3 to 151 (KLTEKDKELI…VVAAMSRGWA (149 aa)). The heme b site is built by histidine 66 and histidine 98.

It belongs to the globin family. As to quaternary structure, monomer. Homodimers and homotetramers. Mainly monomeric but also detected as part of homodimers and homotetramers.

Its subcellular location is the cytoplasm. It is found in the cytosol. The protein resides in the mitochondrion matrix. It catalyses the reaction Fe(III)-heme b-[protein] + nitric oxide + H2O = Fe(II)-heme b-[protein] + nitrite + 2 H(+). Its function is as follows. Monomeric globin with a bis-histidyl six-coordinate heme-iron atom through which it can bind dioxygen, carbon monoxide and nitric oxide. Could help transport oxygen and increase its availability to the metabolically active neuronal tissues, though its low quantity in tissues as well as its high affinity for dioxygen, which may limit its oxygen-releasing ability, argue against it. The ferrous/deoxygenated form exhibits a nitrite reductase activity and it could produce nitric oxide which in turn inhibits cellular respiration in response to hypoxia. In its ferrous/deoxygenated state, it may also exhibit GDI (Guanine nucleotide Dissociation Inhibitor) activity toward heterotrimeric G-alpha proteins, thereby regulating signal transduction to facilitate neuroprotective responses in the wake of hypoxia and associated oxidative stress. The polypeptide is Neuroglobin-2 (ngb2) (Oncorhynchus mykiss (Rainbow trout)).